Here is a 76-residue protein sequence, read N- to C-terminus: Senegalin (76 aa).

Residues 1-22 (MLSLKKSMLLLFFLGMVSFSLA) form the signal peptide. The propeptide occupies 23 to 55 (NKRSDGKRADEEGEDKRADEEGEDKRADEEGED). The tract at residues 24 to 54 (KRSDGKRADEEGEDKRADEEGEDKRADEEGE) is disordered. Leu-75 carries the post-translational modification Leucine amide.

In terms of tissue distribution, expressed by the skin glands.

It localises to the secreted. Antimicrobial peptide with activity against the Gram-positive bacterium S.aureus NCTC 10788 (MIC=50 um) and the yeast C.albicans NCPF 1467 (MIC=150 uM). Ineffective against the Gram-negative bacterium E.coli NCTC 10418. Induces a dose-dependent contraction of rat urinary bladder smooth muscle (EC50=2.9 nM) and a dose-dependent relaxation of rat tail artery smooth muscle (EC50=37.7 nM). The sequence is that of Senegalin from Kassina senegalensis (Senegal running frog).